Reading from the N-terminus, the 207-residue chain is Cytochrome c biogenesis ATP-binding export protein CcmA 1 (207 aa).

One can recognise an ABC transporter domain in the interval 6–207 (LEALDLAGVR…KTSQTVRMGA (202 aa)). 38–45 (GENGSGKT) lines the ATP pocket.

It belongs to the ABC transporter superfamily. CcmA exporter (TC 3.A.1.107) family. In terms of assembly, the complex is composed of two ATP-binding proteins (CcmA) and two transmembrane proteins (CcmB).

It localises to the cell inner membrane. The catalysed reaction is heme b(in) + ATP + H2O = heme b(out) + ADP + phosphate + H(+). Functionally, part of the ABC transporter complex CcmAB involved in the biogenesis of c-type cytochromes; once thought to export heme, this seems not to be the case, but its exact role is uncertain. Responsible for energy coupling to the transport system. In Cupriavidus metallidurans (strain ATCC 43123 / DSM 2839 / NBRC 102507 / CH34) (Ralstonia metallidurans), this protein is Cytochrome c biogenesis ATP-binding export protein CcmA 1.